We begin with the raw amino-acid sequence, 293 residues long: Bisanhydrobacterioruberin hydratase (293 aa).

The next 7 membrane-spanning stretches (helical) occupy residues 36–56, 66–86, 89–109, 134–154, 171–191, 199–219, and 254–274; these read IAVV…EGLL, FVLF…FPLV, RAGL…LVGV, FGLP…VLLL, ATVM…GFWI, GVPW…VLLF, and LFYT…GLLW.

Belongs to the BABR hydratase family.

Its subcellular location is the membrane. It catalyses the reaction bacterioruberin = bisanhydrobacterioruberin + 2 H2O. The protein operates within carotenoid biosynthesis. Its function is as follows. Involved in the biosynthesis of the acyclic C50 carotenoid bacterioruberin (BR). Catalyzes the reaction that introduces hydroxyl groups to C3'' and C3''' of bisanhydrobacterioruberin (BABR) to generate BR. In Haloarcula japonica (strain ATCC 49778 / DSM 6131 / JCM 7785 / NBRC 101032 / NCIMB 13157 / TR-1), this protein is Bisanhydrobacterioruberin hydratase.